Reading from the N-terminus, the 266-residue chain is 5'-nucleotidase SurE (266 aa).

The a divalent metal cation site is built by aspartate 8, aspartate 9, serine 42, and asparagine 98.

It belongs to the SurE nucleotidase family. It depends on a divalent metal cation as a cofactor.

It localises to the cytoplasm. It catalyses the reaction a ribonucleoside 5'-phosphate + H2O = a ribonucleoside + phosphate. In terms of biological role, nucleotidase that shows phosphatase activity on nucleoside 5'-monophosphates. This is 5'-nucleotidase SurE from Methanocaldococcus jannaschii (strain ATCC 43067 / DSM 2661 / JAL-1 / JCM 10045 / NBRC 100440) (Methanococcus jannaschii).